The primary structure comprises 286 residues: Protease HtpX homolog (286 aa).

2 consecutive transmembrane segments (helical) span residues 7-27 (TFML…MIGG) and 29-49 (SGMM…YWFS). H131 lines the Zn(2+) pocket. Residue E132 is part of the active site. H135 lines the Zn(2+) pocket. Transmembrane regions (helical) follow at residues 146-166 (ISAT…FFGG) and 177-197 (IAGI…QMAI). E202 is a Zn(2+) binding site.

This sequence belongs to the peptidase M48B family. It depends on Zn(2+) as a cofactor.

The protein localises to the cell inner membrane. The sequence is that of Protease HtpX homolog from Ralstonia pickettii (strain 12J).